Reading from the N-terminus, the 1137-residue chain is Phytochrome C (1137 aa).

Over residues 1-18 (MSSSRSNNRATCSRSSSA) the composition is skewed to low complexity. A disordered region spans residues 1–27 (MSSSRSNNRATCSRSSSARSKHSARVV). The 184-residue stretch at 217–400 (NLSLLCDVLV…VFGIQINKEV (184 aa)) folds into the GAF domain. A phytochromobilin-binding site is contributed by C322. PAS domains are found at residues 620 to 690 (VTNE…LQGI) and 750 to 824 (IQGD…TKLS). The Histidine kinase domain occupies 904-1124 (YIRQELRNPL…IVLVEFPVAQ (221 aa)).

Belongs to the phytochrome family. As to quaternary structure, homodimer. In terms of processing, contains one covalently linked phytochromobilin chromophore.

Functionally, regulatory photoreceptor which exists in two forms that are reversibly interconvertible by light: the Pr form that absorbs maximally in the red region of the spectrum and the Pfr form that absorbs maximally in the far-red region. Photoconversion of Pr to Pfr induces an array of morphogenic responses, whereas reconversion of Pfr to Pr cancels the induction of those responses. Pfr controls the expression of a number of nuclear genes including those encoding the small subunit of ribulose-bisphosphate carboxylase, chlorophyll A/B binding protein, protochlorophyllide reductase, rRNA, etc. It also controls the expression of its own gene(s) in a negative feedback fashion. The polypeptide is Phytochrome C (PHYC) (Oryza sativa subsp. indica (Rice)).